The chain runs to 513 residues: 2,3-bisphosphoglycerate-independent phosphoglycerate mutase (513 aa).

Positions 14 and 64 each coordinate Mn(2+). The Phosphoserine intermediate role is filled by serine 64. Substrate-binding positions include histidine 125, 155–156, arginine 187, arginine 193, 259–262, and lysine 333; these read RD and RADR. 5 residues coordinate Mn(2+): aspartate 400, histidine 404, aspartate 441, histidine 442, and histidine 460.

Belongs to the BPG-independent phosphoglycerate mutase family. As to quaternary structure, monomer. Requires Mn(2+) as cofactor.

The enzyme catalyses (2R)-2-phosphoglycerate = (2R)-3-phosphoglycerate. It functions in the pathway carbohydrate degradation; glycolysis; pyruvate from D-glyceraldehyde 3-phosphate: step 3/5. Catalyzes the interconversion of 2-phosphoglycerate and 3-phosphoglycerate. The chain is 2,3-bisphosphoglycerate-independent phosphoglycerate mutase from Pseudomonas fluorescens (strain ATCC BAA-477 / NRRL B-23932 / Pf-5).